Consider the following 124-residue polypeptide: MPTINQLIRKPRKSQKEKTASPALQNCPQRRGICTRVMTVTPKKPNSALRKVARVRLSNGFEVTAYIPGIGHNLQEHSVVLIRGGRVKDLPGVRYHIIRGAKDTLGVNNRKQGRSKYGTKKPKA.

Residues 1 to 25 (MPTINQLIRKPRKSQKEKTASPALQ) form a disordered region. Asp89 is subject to 3-methylthioaspartic acid.

The protein belongs to the universal ribosomal protein uS12 family. In terms of assembly, part of the 30S ribosomal subunit. Contacts proteins S8 and S17. May interact with IF1 in the 30S initiation complex.

With S4 and S5 plays an important role in translational accuracy. In terms of biological role, interacts with and stabilizes bases of the 16S rRNA that are involved in tRNA selection in the A site and with the mRNA backbone. Located at the interface of the 30S and 50S subunits, it traverses the body of the 30S subunit contacting proteins on the other side and probably holding the rRNA structure together. The combined cluster of proteins S8, S12 and S17 appears to hold together the shoulder and platform of the 30S subunit. This chain is Small ribosomal subunit protein uS12, found in Borrelia turicatae (strain 91E135).